The sequence spans 332 residues: Adenosine receptor A2b (332 aa).

The Extracellular segment spans residues 1–8 (MQLETQDA). A helical membrane pass occupies residues 9 to 33 (LYVALELVIAALAVAGNVLVCAAVG). At 34–43 (ASSALQTPTN) the chain is on the cytoplasmic side. The helical transmembrane segment at 44 to 67 (YFLVSLATADVAVGLFAIPFAITI) threads the bilayer. Over 68-78 (SLGFCTDFHGC) the chain is Extracellular. Cys-78 and Cys-171 are oxidised to a cystine. A helical transmembrane segment spans residues 79–101 (LFLACFVLVLTQSSIFSLLAVAV). The Cytoplasmic segment spans residues 102-121 (DRYLAIRVPLRYKGLVTGTR). Residues 122–144 (ARGIIAVLWVLAFGIGLTPFLGW) traverse the membrane as a helical segment. The Extracellular portion of the chain corresponds to 145 to 178 (NSKDSATSNCTELGDGIANKSCCPVTCLFENVVP). Residues Asn-153 and Asn-163 are each glycosylated (N-linked (GlcNAc...) asparagine). Glu-174 provides a ligand contact to adenosine. Residues 179–203 (MSYMVYFNFFGCVLPPLLIMLVIYI) traverse the membrane as a helical segment. Residues 204 to 235 (KIFMVACKQLQRMELMDHSRTTLQREIHAAKS) lie on the Cytoplasmic side of the membrane. A helical membrane pass occupies residues 236 to 259 (LAMIVGIFALCWLPVHAINCITLF). Adenosine is bound at residue Asn-254. The Extracellular segment spans residues 260-267 (HPALAKDK). A helical membrane pass occupies residues 268 to 291 (PKWVMNVAILLSHANSVVNPIVYA). Positions 279 and 280 each coordinate adenosine. Residues 292-332 (YRNRDFRYSFHKIISRYVLCQAETKGGSGQAGAQSTLSLGL) are Cytoplasmic-facing. A lipid anchor (S-palmitoyl cysteine) is attached at Cys-311.

Belongs to the G-protein coupled receptor 1 family.

The protein localises to the cell membrane. Functionally, receptor for adenosine. The activity of this receptor is mediated by G proteins which activate adenylyl cyclase. The protein is Adenosine receptor A2b (Adora2b) of Mus musculus (Mouse).